A 695-amino-acid polypeptide reads, in one-letter code: Elongation factor G (695 aa).

Residues 8 to 282 (EKTRNIGIMA…AVLDYLPAPT (275 aa)) form the tr-type G domain. GTP-binding positions include 17–24 (AHIDAGKT), 81–85 (DTPGH), and 135–138 (NKMD).

Belongs to the TRAFAC class translation factor GTPase superfamily. Classic translation factor GTPase family. EF-G/EF-2 subfamily.

The protein localises to the cytoplasm. Its function is as follows. Catalyzes the GTP-dependent ribosomal translocation step during translation elongation. During this step, the ribosome changes from the pre-translocational (PRE) to the post-translocational (POST) state as the newly formed A-site-bound peptidyl-tRNA and P-site-bound deacylated tRNA move to the P and E sites, respectively. Catalyzes the coordinated movement of the two tRNA molecules, the mRNA and conformational changes in the ribosome. The polypeptide is Elongation factor G (Listeria welshimeri serovar 6b (strain ATCC 35897 / DSM 20650 / CCUG 15529 / CIP 8149 / NCTC 11857 / SLCC 5334 / V8)).